A 205-amino-acid chain; its full sequence is uncharacterized protein (205 aa).

This sequence belongs to the IIV-6 170L family.

This is an uncharacterized protein from Invertebrate iridescent virus 3 (IIV-3).